The primary structure comprises 328 residues: Phosphate acyltransferase (328 aa).

This sequence belongs to the PlsX family. As to quaternary structure, homodimer. Probably interacts with PlsY.

It localises to the cytoplasm. The catalysed reaction is a fatty acyl-[ACP] + phosphate = an acyl phosphate + holo-[ACP]. It participates in lipid metabolism; phospholipid metabolism. Catalyzes the reversible formation of acyl-phosphate (acyl-PO(4)) from acyl-[acyl-carrier-protein] (acyl-ACP). This enzyme utilizes acyl-ACP as fatty acyl donor, but not acyl-CoA. This chain is Phosphate acyltransferase, found in Staphylococcus aureus (strain USA300).